The primary structure comprises 449 residues: UDP-N-acetylmuramoylalanine--D-glutamate ligase (449 aa).

118–124 (GTNGKTT) contacts ATP.

It belongs to the MurCDEF family.

It is found in the cytoplasm. It catalyses the reaction UDP-N-acetyl-alpha-D-muramoyl-L-alanine + D-glutamate + ATP = UDP-N-acetyl-alpha-D-muramoyl-L-alanyl-D-glutamate + ADP + phosphate + H(+). The protein operates within cell wall biogenesis; peptidoglycan biosynthesis. In terms of biological role, cell wall formation. Catalyzes the addition of glutamate to the nucleotide precursor UDP-N-acetylmuramoyl-L-alanine (UMA). The polypeptide is UDP-N-acetylmuramoylalanine--D-glutamate ligase (Staphylococcus aureus (strain MSSA476)).